The sequence spans 124 residues: Small ribosomal subunit protein bS6 (124 aa).

Residues 96–124 (ETAPSPMMKEVQREEARKAAQTTTEGQPA) are disordered. A compositionally biased stretch (polar residues) spans 115-124 (AQTTTEGQPA).

The protein belongs to the bacterial ribosomal protein bS6 family.

Binds together with bS18 to 16S ribosomal RNA. This is Small ribosomal subunit protein bS6 from Cupriavidus metallidurans (strain ATCC 43123 / DSM 2839 / NBRC 102507 / CH34) (Ralstonia metallidurans).